The sequence spans 719 residues: Fusicoccadiene synthase (719 aa).

Positions 1 to 334 (MEFKYSEVVE…RYNPDVSFNK (334 aa)) are fusicocca-2,10(14)-diene synthase. Aspartate 92 and aspartate 96 together coordinate Mg(2+). The segment at 335–719 (TQLEWMRQGL…MRLLLELLRV (385 aa)) is geranylgeranyl diphosphate synthase. Positions 358–404 (EIDSDESAVSPTADESDSTEDSLGSGSRQDSSLSTGLSLSPVHSNEG) are disordered. Over residues 378 to 400 (DSLGSGSRQDSSLSTGLSLSPVH) the composition is skewed to polar residues. Residues lysine 435, arginine 438, and histidine 467 each coordinate isopentenyl diphosphate. Residues aspartate 474 and aspartate 478 each coordinate Mg(2+). Dimethylallyl diphosphate is bound at residue arginine 483. Position 484 (arginine 484) interacts with isopentenyl diphosphate. 6 residues coordinate dimethylallyl diphosphate: lysine 561, threonine 562, glutamine 602, asparagine 609, lysine 619, and lysine 629.

The protein in the N-terminal section; belongs to the terpene synthase family. In the C-terminal section; belongs to the FPP/GGPP synthase family. Hexamer.

It carries out the reaction geranylgeranyl diphosphate = fusicocca-2,10(14)-diene + diphosphate. The enzyme catalyses isopentenyl diphosphate + (2E,6E)-farnesyl diphosphate = (2E,6E,10E)-geranylgeranyl diphosphate + diphosphate. Its pathway is mycotoxin biosynthesis. In terms of biological role, multifunctional diterpene synthase; part of the 2 gene clusters that mediate the biosynthesis of fusicoccins, diterpene glucosides that display phytohormone-like activity and function as potent activators of plasma membrane H(+)-ATPases in plants by modifying 14-3-3 proteins and cause the plant disease constriction canker. The first step in the pathway is performed by the fusicoccadiene synthase PaFS that possesses both prenyl transferase and terpene cyclase activity, converting isopentenyl diphosphate and dimethylallyl diphosphate into geranylgeranyl diphosphate (GGDP) and successively converting GGDP into fusicocca-2,10(14)-diene, a precursor for fusicoccin H. Fusicoccadiene synthase is an allosteric enzyme for GGPP cyclization that generates 64% fusicoccadiene, 9% delta-araneosene, and one additional unidentified diterpene product, when incubated with GGPP. In the absence of isopentenyl diphosphate (IPP), PaFS can also solvolyze the shorter chain geranyl diphosphate (GPP) and farnesyl diphosphate (FPP) as alternative substrates to yield predominantly acyclic products. FPP is converted to farnesol (60.5%), nerolidol (14.0%), and farnesene (14.0%), while GPP is converted to a mixture of geraniol (59.5%) and linalool (35.0%). The second step is the oxidation at the C-8 position by the cytochrome P450 monooxygenase PaP450-2 to yield fusicocca-2,10(14)-diene-8-beta-ol. The cytochrome P450 monooxygenase PaP450-1 then catalyzes the hydroxylation at the C-16 position to produce fusicocca-2,10(14)-diene-8-beta,16-diol. The dioxygenase fc-dox then catalyzes the 16-oxydation of fusicocca-2,10(14)-diene-8-beta,16-diol to yield an aldehyde (8-beta-hydroxyfusicocca-1,10(14)-dien-16-al). The short-chain dehydrogenase/reductase fc-sdr catalyzes the reduction of the aldehyde to yield fusicocca-1,10(14)-diene-8-beta,16-diol. The next step is the hydroxylation at C-9 performed by the cytochrome P450 monooxygenase PaP450-3 that leads to fusicoccin H aglycon which is glycosylated to fusicoccin H by the O-glycosyltransferase PAGT. Hydroxylation at C-12 by the cytochrome P450 monooxygenase PaP450-4 leads then to the production of fusicoccin Q and is followed by methylation by the O-methyltransferase PAMT to yield fusicoccin P. Fusicoccin P is further converted to fusicoccin J via prenylation by the O-glucose prenyltransferase PaPT. Cytochrome P450 monooxygenase PaP450-5 then performs hydroxylation at C-19 to yield dideacetyl-fusicoccin A which is acetylated to 3'-O-deacetyl-fusicoccin A by the O-acetyltransferase PaAT-2. Finally, a another acetylation by the O-acetyltransferase PaAT-1 yields fusicoccin A. The chain is Fusicoccadiene synthase from Phomopsis amygdali (Fusicoccum amygdali).